The sequence spans 425 residues: E3 ubiquitin-protein ligase GW2 (425 aa).

The segment at Cys-62 to Lys-105 adopts an RING-type; degenerate zinc-finger fold.

As to expression, expressed in roots, shoots, leaves, inflorescence meristems, stamens, pistils, spikelet hulls and endosperms 4 days after fertilization.

Its subcellular location is the cytoplasm. It catalyses the reaction S-ubiquitinyl-[E2 ubiquitin-conjugating enzyme]-L-cysteine + [acceptor protein]-L-lysine = [E2 ubiquitin-conjugating enzyme]-L-cysteine + N(6)-ubiquitinyl-[acceptor protein]-L-lysine.. It functions in the pathway protein modification; protein ubiquitination. Its function is as follows. E3 ubiquitin-protein ligase involved in the regulation of grain size. May limit grain width and weight by restricting cell proliferation of the spikelet hull. Possesses E3 ubiquitin-protein ligase activity in vitro. This Oryza sativa subsp. indica (Rice) protein is E3 ubiquitin-protein ligase GW2.